The primary structure comprises 503 residues: Serine/threonine-protein kinase chk-1 (503 aa).

The region spanning 24–286 is the Protein kinase domain; that stretch reads YRVVQTLGEG…IEQIQADPWY (263 aa). Residues 30-38 and Lys54 each bind ATP; that span reads LGEGAFGEV. The active-site Proton acceptor is Asp150. The tract at residues 320–346 is disordered; the sequence is SAKRRHLETPNEKSTLAERQNASFSQP. A compositionally biased stretch (polar residues) spans 331–346; it reads EKSTLAERQNASFSQP. Ser344 bears the Phosphoserine mark.

The protein belongs to the protein kinase superfamily. CAMK Ser/Thr protein kinase family. NIM1 subfamily. In terms of tissue distribution, expressed in the germline.

Its subcellular location is the cytoplasm. It localises to the nucleus. The protein resides in the perinuclear region. The catalysed reaction is L-seryl-[protein] + ATP = O-phospho-L-seryl-[protein] + ADP + H(+). It carries out the reaction L-threonyl-[protein] + ATP = O-phospho-L-threonyl-[protein] + ADP + H(+). Its function is as follows. Serine/threonine-protein kinase which is required for checkpoint-mediated cell cycle arrest and activation of DNA repair in response to the presence of DNA damage or unreplicated DNA. May also negatively regulate cell cycle progression during unperturbed cell cycles. Required for checkpoint mediated cell cycle arrest in response to DNA damage in germline cells. Delays cell-cycle reentry of the Z2 and Z3 primordial germ cells in response to transcription-induced DNA damage as they emerge from cell cycle arrest in L1 larvae. Essential for embryogenesis. In Caenorhabditis elegans, this protein is Serine/threonine-protein kinase chk-1.